A 141-amino-acid chain; its full sequence is Large ribosomal subunit protein uL22c (141 aa).

It belongs to the universal ribosomal protein uL22 family. Part of the 50S ribosomal subunit.

The protein localises to the plastid. Its subcellular location is the chloroplast. Its function is as follows. This protein binds specifically to 23S rRNA. In terms of biological role, the globular domain of the protein is located near the polypeptide exit tunnel on the outside of the subunit, while an extended beta-hairpin is found that lines the wall of the exit tunnel in the center of the 70S ribosome. The polypeptide is Large ribosomal subunit protein uL22c (rpl22) (Chloranthus spicatus (Chulantree)).